A 237-amino-acid polypeptide reads, in one-letter code: Cysteine-rich venom protein ENH2 (237 aa).

The first 18 residues, methionine 1–alanine 18, serve as a signal peptide directing secretion. The 129-residue stretch at valine 37–tyrosine 165 folds into the SCP domain. Intrachain disulfides connect cysteine 74–cysteine 152, cysteine 91–cysteine 166, cysteine 147–cysteine 163, cysteine 185–cysteine 192, cysteine 188–cysteine 197, cysteine 210–cysteine 228, and cysteine 219–cysteine 232. One can recognise a ShKT domain in the interval cysteine 201 to lysine 237.

Belongs to the CRISP family. As to expression, expressed by the venom gland.

Its subcellular location is the secreted. In terms of biological role, blocks contraction of smooth muscle elicited by high potassium-induced depolarization, but does not block caffeine-stimulated contraction. May target voltage-gated calcium channels on smooth muscle. The polypeptide is Cysteine-rich venom protein ENH2 (Pseudoferania polylepis (Macleay's water snake)).